Here is an 810-residue protein sequence, read N- to C-terminus: Leucine--tRNA ligase (810 aa).

The short motif at 41 to 52 is the 'HIGH' region element; it reads PYPSGQGLHVGH. The 'KMSKS' region signature appears at 582–586; that stretch reads KMSKS. An ATP-binding site is contributed by K585.

Belongs to the class-I aminoacyl-tRNA synthetase family.

The protein localises to the cytoplasm. The catalysed reaction is tRNA(Leu) + L-leucine + ATP = L-leucyl-tRNA(Leu) + AMP + diphosphate. In Oenococcus oeni (strain ATCC BAA-331 / PSU-1), this protein is Leucine--tRNA ligase.